The primary structure comprises 514 residues: Coiled-coil domain-containing protein 174 (514 aa).

Disordered regions lie at residues 42 to 83 (AKPK…DQSR) and 137 to 162 (TLEK…PDEE). Basic and acidic residues predominate over residues 63 to 83 (KRAEKDIEQKAEEDQTLDQSR). A coiled-coil region spans residues 66–98 (EKDIEQKAEEDQTLDQSRKKLEEKAKLYEKMTK). Residues 141–162 (ETDDEEIEPEMEIPPPEDPDEE) are compositionally biased toward acidic residues. Coiled-coil stretches lie at residues 203 to 227 (LLSE…ALRK) and 266 to 321 (LDML…LENG). Disordered regions lie at residues 270–291 (REQT…KAAL) and 306–490 (LREE…PSAH). Basic and acidic residues-rich tracts occupy residues 335-354 (EVPR…RDTK) and 376-388 (KKQE…RDPE). The segment covering 405–418 (YSSQNLNSPETSPG) has biased composition (polar residues). The segment covering 420–429 (TEPEISENQK) has biased composition (basic and acidic residues).

The protein resides in the nucleus. Probably involved in neuronal development. This chain is Coiled-coil domain-containing protein 174 (CCDC174), found in Gallus gallus (Chicken).